The following is a 91-amino-acid chain: Large ribosomal subunit protein bL27 (91 aa).

The segment covering 1–13 (MATKKSGGSSCNG) has biased composition (polar residues). The tract at residues 1-20 (MATKKSGGSSCNGRDSRGRR) is disordered.

The protein belongs to the bacterial ribosomal protein bL27 family.

In Anaplasma phagocytophilum (strain HZ), this protein is Large ribosomal subunit protein bL27.